A 63-amino-acid chain; its full sequence is Large ribosomal subunit protein bL28 (63 aa).

It belongs to the bacterial ribosomal protein bL28 family.

This Clostridium acetobutylicum (strain ATCC 824 / DSM 792 / JCM 1419 / IAM 19013 / LMG 5710 / NBRC 13948 / NRRL B-527 / VKM B-1787 / 2291 / W) protein is Large ribosomal subunit protein bL28.